The chain runs to 707 residues: SEC14-like protein 5 (707 aa).

In terms of domain architecture, PRELI/MSF1 spans 3 to 175; sequence QKYQSPVRVY…YLNELISQGI (173 aa). Positions 201 to 211 are enriched in polar residues; it reads RSNQAEQTASQ. Residues 201-232 are disordered; that stretch reads RSNQAEQTASQGPCKADAGSHSLAAEPSTPDT. The region spanning 315–491 is the CRAL-TRIO domain; sequence PPRVLEEYYA…FLGGECVCNI (177 aa). One can recognise a GOLD domain in the interval 518–667; that stretch reads TETIYQSSCV…KCKLMYYFEV (150 aa). The span at 686-695 shows a compositional bias: polar residues; the sequence is FSQLSGVTNT. The segment at 686 to 707 is disordered; sequence FSQLSGVTNTSSKSHSSSLISR. Residues 696–707 show a composition bias toward low complexity; the sequence is SSKSHSSSLISR.

The polypeptide is SEC14-like protein 5 (sec14l1) (Xenopus tropicalis (Western clawed frog)).